Consider the following 505-residue polypeptide: MASIDFRNKINWHRRYRSPQGVKTEHEILRIFESDRGRIINSPAIRRLQQKTQVFPLERNAAVRTRLTHSMEVQQVGRYIAKEILSRLKEQNRLEEYGLDALTGPFESIVEMACLMHDIGNPPFGHFGEAAINDWFRQRLHPEDAESQPLTHDRCVVSSLRLQEGEENLNDIRRKVRQDICHFEGNAQGIRLVHTLMRMNLTWAQVGGILKYTRPAWWRGPVPDSHRYLMKKPGYYLSEEKYIARLRKELQLAPYSRFPLTWIMEAADDISYCVADLEDAVEKRIFSVEQLYHHLYHAWGHHEKDSLFELVVGNAWEKSRANTLSRSTEDQFFMYLRVNTLNKLVPYAAQRFIDNLPQIFAGTFNQALLEDASGFSRLLELYKNVAVEHVFSHPDVEQLELQGYRVISGLLDIYQPLLSLSLNDFRELVEKERLKRFPIESRLFQKLSTRHRLAYVEVVSKLPTDSAEYPVLEYYYRCRLIQDYISGMTDLYAWDEYRRLMAVEQ.

The region spanning 66-273 (RLTHSMEVQQ…MEAADDISYC (208 aa)) is the HD domain.

This sequence belongs to the dGTPase family. Type 1 subfamily. In terms of assembly, homotetramer. Mg(2+) serves as cofactor.

It catalyses the reaction dGTP + H2O = 2'-deoxyguanosine + triphosphate + H(+). Functionally, dGTPase preferentially hydrolyzes dGTP over the other canonical NTPs. The polypeptide is Deoxyguanosinetriphosphate triphosphohydrolase (Salmonella schwarzengrund (strain CVM19633)).